Here is a 418-residue protein sequence, read N- to C-terminus: Triacylglycerol lipase 2 (418 aa).

An N-terminal signal peptide occupies residues 1–31; that stretch reads MAGSVMVPSVSIGLALSVLIFFALSLKTLEA. Asparagine 158 carries N-linked (GlcNAc...) asparagine glycosylation. Serine 190 acts as the Nucleophile in catalysis. N-linked (GlcNAc...) asparagine glycosylation is found at asparagine 286 and asparagine 342. Residues aspartate 360 and histidine 393 each act as charge relay system in the active site.

The protein belongs to the AB hydrolase superfamily. Lipase family.

Its subcellular location is the secreted. It carries out the reaction a triacylglycerol + H2O = a diacylglycerol + a fatty acid + H(+). In terms of biological role, triacylglycerol (TAG) lipase. May be involved for TAG storage breakdown during seed germination. This chain is Triacylglycerol lipase 2 (LIP2), found in Arabidopsis thaliana (Mouse-ear cress).